The chain runs to 527 residues: Peptide chain release factor 3 (527 aa).

In terms of domain architecture, tr-type G spans 9 to 277; that stretch reads AKRRTFAIIS…AVVDWAPKPL (269 aa). GTP-binding positions include 18-25, 86-90, and 140-143; these read SHPDAGKT, DTPGH, and NKLD.

The protein belongs to the TRAFAC class translation factor GTPase superfamily. Classic translation factor GTPase family. PrfC subfamily.

Its subcellular location is the cytoplasm. Its function is as follows. Increases the formation of ribosomal termination complexes and stimulates activities of RF-1 and RF-2. It binds guanine nucleotides and has strong preference for UGA stop codons. It may interact directly with the ribosome. The stimulation of RF-1 and RF-2 is significantly reduced by GTP and GDP, but not by GMP. This chain is Peptide chain release factor 3, found in Stutzerimonas stutzeri (strain A1501) (Pseudomonas stutzeri).